Here is a 63-residue protein sequence, read N- to C-terminus: Muscarinic toxin 2 (63 aa).

Cystine bridges form between cysteine 3–cysteine 22, cysteine 17–cysteine 42, cysteine 44–cysteine 55, and cysteine 56–cysteine 61.

The protein belongs to the three-finger toxin family. Short-chain subfamily. Type B muscarinic toxin sub-subfamily. As to quaternary structure, monomer. As to expression, expressed by the venom gland.

Its subcellular location is the secreted. Functionally, blocks M2 muscarinic acetylcholine receptors (CHRM2). Fully blocks the binding of N-methylscopolamine (NMS) and oxotremorine-M to M2 receptors, slightly increased NMS binding to M1 receptors. The chain is Muscarinic toxin 2 from Dendroaspis angusticeps (Eastern green mamba).